The chain runs to 890 residues: Alanine--tRNA ligase (890 aa).

Zn(2+) contacts are provided by histidine 569, histidine 573, cysteine 671, and histidine 675.

Belongs to the class-II aminoacyl-tRNA synthetase family. Requires Zn(2+) as cofactor.

The protein localises to the cytoplasm. It catalyses the reaction tRNA(Ala) + L-alanine + ATP = L-alanyl-tRNA(Ala) + AMP + diphosphate. Its function is as follows. Catalyzes the attachment of alanine to tRNA(Ala) in a two-step reaction: alanine is first activated by ATP to form Ala-AMP and then transferred to the acceptor end of tRNA(Ala). Also edits incorrectly charged Ser-tRNA(Ala) and Gly-tRNA(Ala) via its editing domain. This Synechococcus sp. (strain CC9902) protein is Alanine--tRNA ligase.